Reading from the N-terminus, the 705-residue chain is Polyribonucleotide nucleotidyltransferase (705 aa).

Mg(2+) contacts are provided by Asp-486 and Asp-492. A KH domain is found at 553-612; the sequence is PRIYTMKINPEKIKDVIGKGGSVIRALTDETGTTIEIEDDGTIKIAATDGDKAKHAIRRI. Residues 622–690 enclose the S1 motif domain; that stretch reads GRIYAGKVTR…RQGRIRLSIK (69 aa).

The protein belongs to the polyribonucleotide nucleotidyltransferase family. In terms of assembly, component of the RNA degradosome, which is a multiprotein complex involved in RNA processing and mRNA degradation. The cofactor is Mg(2+).

The protein resides in the cytoplasm. The catalysed reaction is RNA(n+1) + phosphate = RNA(n) + a ribonucleoside 5'-diphosphate. Functionally, involved in mRNA degradation. Catalyzes the phosphorolysis of single-stranded polyribonucleotides processively in the 3'- to 5'-direction. This is Polyribonucleotide nucleotidyltransferase from Yersinia pseudotuberculosis serotype O:3 (strain YPIII).